Consider the following 360-residue polypeptide: Phenylalanine--tRNA ligase alpha subunit (360 aa).

E260 contributes to the Mg(2+) binding site.

It belongs to the class-II aminoacyl-tRNA synthetase family. Phe-tRNA synthetase alpha subunit type 1 subfamily. As to quaternary structure, tetramer of two alpha and two beta subunits. Mg(2+) is required as a cofactor.

Its subcellular location is the cytoplasm. The enzyme catalyses tRNA(Phe) + L-phenylalanine + ATP = L-phenylalanyl-tRNA(Phe) + AMP + diphosphate + H(+). The chain is Phenylalanine--tRNA ligase alpha subunit from Rhizobium rhizogenes (strain K84 / ATCC BAA-868) (Agrobacterium radiobacter).